A 204-amino-acid polypeptide reads, in one-letter code: Small ribosomal subunit protein uS4 (204 aa).

One can recognise an S4 RNA-binding domain in the interval 93–156; sequence SRLSSVLYHS…AKIPILIEAE (64 aa).

This sequence belongs to the universal ribosomal protein uS4 family. Part of the 30S ribosomal subunit. Contacts protein S5. The interaction surface between S4 and S5 is involved in control of translational fidelity.

Functionally, one of the primary rRNA binding proteins, it binds directly to 16S rRNA where it nucleates assembly of the body of the 30S subunit. In terms of biological role, with S5 and S12 plays an important role in translational accuracy. This chain is Small ribosomal subunit protein uS4, found in Wolbachia pipientis subsp. Culex pipiens (strain wPip).